A 338-amino-acid chain; its full sequence is Glycerol-3-phosphate dehydrogenase [NAD(P)+] (338 aa).

Positions 14, 15, 35, and 109 each coordinate NADPH. Residues Lys-109, Gly-138, and Thr-140 each coordinate sn-glycerol 3-phosphate. Ala-142 is an NADPH binding site. Sn-glycerol 3-phosphate-binding residues include Lys-194, Asp-247, Ser-257, Arg-258, and Asn-259. Lys-194 (proton acceptor) is an active-site residue. An NADPH-binding site is contributed by Arg-258. Positions 282 and 284 each coordinate NADPH.

The protein belongs to the NAD-dependent glycerol-3-phosphate dehydrogenase family.

It is found in the cytoplasm. It carries out the reaction sn-glycerol 3-phosphate + NAD(+) = dihydroxyacetone phosphate + NADH + H(+). The enzyme catalyses sn-glycerol 3-phosphate + NADP(+) = dihydroxyacetone phosphate + NADPH + H(+). It participates in membrane lipid metabolism; glycerophospholipid metabolism. Its function is as follows. Catalyzes the reduction of the glycolytic intermediate dihydroxyacetone phosphate (DHAP) to sn-glycerol 3-phosphate (G3P), the key precursor for phospholipid synthesis. This Shewanella sediminis (strain HAW-EB3) protein is Glycerol-3-phosphate dehydrogenase [NAD(P)+].